Here is a 403-residue protein sequence, read N- to C-terminus: Leu/Ile/Val-binding protein homolog 8 (403 aa).

The N-terminal stretch at 1-26 is a signal peptide; the sequence is MRLSRLLIGASLGVALSSTAFTAALA.

The protein belongs to the leucine-binding protein family.

In terms of biological role, component of an amino-acid transport system. The protein is Leu/Ile/Val-binding protein homolog 8 of Brucella suis biovar 1 (strain 1330).